A 303-amino-acid chain; its full sequence is MWFKNLTVYRFNKPFSVDTEALEKSLEDFTFSPCSSQDISKFGFSKALGKLGHTLVHSAENRHLICATKEEKILPSQVVKEALEEKVAQIEAEENRKLAKKEKDALKEEITTTLLPRAFSRRSQIHALILPEIEMILVDSSSATKAEELLALLRKALGSLPVIPMSFKTPIEAQLTEWLKSNSAPAPFEMQDEAELKSDSDEGGIVRFKQQDLTENEVLAHLEVGKQVHKLALHFGQSIAFVLQSDAGIKRLKFSEEFRAHNDEVSTEDPLARLDADFALMGSELIALMNSLVEVLGGLEDSL.

It belongs to the RdgC family.

It localises to the cytoplasm. It is found in the nucleoid. In terms of biological role, may be involved in recombination. The polypeptide is Recombination-associated protein RdgC (Shewanella loihica (strain ATCC BAA-1088 / PV-4)).